Consider the following 358-residue polypeptide: Methylthioribose-1-phosphate isomerase (358 aa).

Substrate contacts are provided by residues 54 to 56 (RGA), arginine 96, and glutamine 205. Aspartate 246 serves as the catalytic Proton donor. 256-257 (NK) contacts substrate.

The protein belongs to the eIF-2B alpha/beta/delta subunits family. MtnA subfamily.

It catalyses the reaction 5-(methylsulfanyl)-alpha-D-ribose 1-phosphate = 5-(methylsulfanyl)-D-ribulose 1-phosphate. Its pathway is amino-acid biosynthesis; L-methionine biosynthesis via salvage pathway; L-methionine from S-methyl-5-thio-alpha-D-ribose 1-phosphate: step 1/6. Its function is as follows. Catalyzes the interconversion of methylthioribose-1-phosphate (MTR-1-P) into methylthioribulose-1-phosphate (MTRu-1-P). The polypeptide is Methylthioribose-1-phosphate isomerase (Azotobacter vinelandii (strain DJ / ATCC BAA-1303)).